We begin with the raw amino-acid sequence, 85 residues long: Small ribosomal subunit protein bS16c (85 aa).

This sequence belongs to the bacterial ribosomal protein bS16 family.

The protein resides in the plastid. It localises to the chloroplast. In Saccharum hybrid (Sugarcane), this protein is Small ribosomal subunit protein bS16c.